A 160-amino-acid chain; its full sequence is Transcription antitermination protein NusB (160 aa).

This sequence belongs to the NusB family.

Its function is as follows. Involved in transcription antitermination. Required for transcription of ribosomal RNA (rRNA) genes. Binds specifically to the boxA antiterminator sequence of the ribosomal RNA (rrn) operons. This chain is Transcription antitermination protein NusB, found in Rhizobium leguminosarum bv. trifolii (strain WSM2304).